Here is a 671-residue protein sequence, read N- to C-terminus: DNA ligase (671 aa).

Residues 32–36 (DVEYD), 81–82 (SL), and Glu113 each bind NAD(+). Catalysis depends on Lys115, which acts as the N6-AMP-lysine intermediate. Positions 136, 173, 290, and 314 each coordinate NAD(+). Cys408, Cys411, Cys426, and Cys432 together coordinate Zn(2+). The BRCT domain maps to 593-671 (EIDSPFAGKT…EAEMLRLLGS (79 aa)).

This sequence belongs to the NAD-dependent DNA ligase family. LigA subfamily. It depends on Mg(2+) as a cofactor. The cofactor is Mn(2+).

The enzyme catalyses NAD(+) + (deoxyribonucleotide)n-3'-hydroxyl + 5'-phospho-(deoxyribonucleotide)m = (deoxyribonucleotide)n+m + AMP + beta-nicotinamide D-nucleotide.. DNA ligase that catalyzes the formation of phosphodiester linkages between 5'-phosphoryl and 3'-hydroxyl groups in double-stranded DNA using NAD as a coenzyme and as the energy source for the reaction. It is essential for DNA replication and repair of damaged DNA. This is DNA ligase from Escherichia coli O17:K52:H18 (strain UMN026 / ExPEC).